The following is a 306-amino-acid chain: Reticulocalbin-2 (306 aa).

The N-terminal stretch at 1 to 22 (MESPTLLGLLLLLLGGPGTSLG) is a signal peptide. EF-hand domains are found at residues 50-85 (EQQK…SFKS), 86-121 (YIIE…RVID), 144-173 (KKRF…EEAD), 175-210 (MKEF…DPAA), 226-251 (NDYD…NNEG), and 252-287 (LAQE…FLNS). Positions 99, 101, 103, 105, and 110 each coordinate Ca(2+). Residues Asp188, Asp190, Asp192, Glu199, Asp229, Asp231, Asp233, Lys235, Glu240, Asp265, Asp267, Asp269, Arg271, and Glu276 each contribute to the Ca(2+) site.

Belongs to the CREC family. In terms of assembly, may bind phospholipase A2, since the rat reticulocalbin-2 has been isolated on the phospholipase complex taipoxin columns. As to expression, expressed by the venom gland.

The protein resides in the secreted. The polypeptide is Reticulocalbin-2 (Crotalus adamanteus (Eastern diamondback rattlesnake)).